Reading from the N-terminus, the 70-residue chain is Small ribosomal subunit protein eS17 (70 aa).

This sequence belongs to the eukaryotic ribosomal protein eS17 family.

In Methanopyrus kandleri (strain AV19 / DSM 6324 / JCM 9639 / NBRC 100938), this protein is Small ribosomal subunit protein eS17.